Reading from the N-terminus, the 131-residue chain is Small ribosomal subunit protein bS6 (131 aa).

This sequence belongs to the bacterial ribosomal protein bS6 family.

Its function is as follows. Binds together with bS18 to 16S ribosomal RNA. In Borrelia hermsii (strain HS1 / DAH), this protein is Small ribosomal subunit protein bS6.